Here is a 204-residue protein sequence, read N- to C-terminus: Terpene cyclase trt1 (204 aa).

Transmembrane regions (helical) follow at residues 44–64 (FMSI…YPIA), 67–87 (HWAG…FIVA), 103–122 (FARL…HLAL), 132–154 (FFWS…LVCR), and 169–189 (WFYI…FFYF).

Belongs to the paxB family.

The protein resides in the membrane. It participates in secondary metabolite biosynthesis; terpenoid biosynthesis. Functionally, terpene cyclase; part of the gene cluster that mediates the biosynthesis of terretonin, a fungal meroterpenoid that acts as a mycotoxin. The first step of the pathway is the synthesis of 3,5-dimethylorsellinic acid (DMOA) by the polyketide synthase trt4. DMOA is then prenylated into farnesyl-DMOA by the polyprenyl transferase trt2. Methylation by the methyltransferase trt5 then leads to farnesyl-DMOA methyl ester which is further subject to epoxidation by the FAD-dependent monooxygenase trt8 to yield epoxyfarnesyl-DMOA methyl ester. Cyclization of epoxyfarnesyl-DMOA methyl ester by the terpene cyclase trt1 leads to a tetracycle intermediate which is in turn converted to preterretonin. Dehydrogenase trt9 comes next to transform preterretonin to preterrenoid. The FAD-dependent monooxygenase trt3 is then required for the C-hydroxylation at C16 of preterrenoid to yield terrenoid. The cytochrome P450 trt6 catalyzes three successive oxidations to transform terrenoid into an unstable intermediate, which then undergoes the D-ring expansion and unusual rearrangement of the methoxy group to afford the core skeleton of terretonin. Trt14 catalyzes the D-ring expansion of terretonin involving intramolecular methoxy rearrangement as well as the hydrolysis of the expanded D-ring and the methyl ester moiety. Finally, the nonheme iron-dependent dioxygenase trt7 accomplishes the last two oxidation reactions steps to complete the biosynthesis of terretonin. Terretonin C is produced via spontaneous decarboxylation of the terretonin precursor. Another shunt product of the terretonin biosynthesis is dihydrofarnesyl-DMOA, derived from epoxyfarnesyl-DMOA through hydrolysis of the epoxide. This chain is Terpene cyclase trt1, found in Aspergillus terreus (strain NIH 2624 / FGSC A1156).